The chain runs to 133 residues: Small ribosomal subunit protein uS8 (133 aa).

It belongs to the universal ribosomal protein uS8 family. In terms of assembly, part of the 30S ribosomal subunit. Contacts proteins S5 and S12.

Its function is as follows. One of the primary rRNA binding proteins, it binds directly to 16S rRNA central domain where it helps coordinate assembly of the platform of the 30S subunit. This is Small ribosomal subunit protein uS8 from Mycoplasma mobile (strain ATCC 43663 / 163K / NCTC 11711) (Mesomycoplasma mobile).